The following is an 883-amino-acid chain: Phosphoenolpyruvate carboxylase (883 aa).

Residues histidine 138 and lysine 546 contribute to the active site.

The protein belongs to the PEPCase type 1 family. The cofactor is Mg(2+).

It catalyses the reaction oxaloacetate + phosphate = phosphoenolpyruvate + hydrogencarbonate. Its function is as follows. Forms oxaloacetate, a four-carbon dicarboxylic acid source for the tricarboxylic acid cycle. In Salmonella dublin (strain CT_02021853), this protein is Phosphoenolpyruvate carboxylase.